Consider the following 287-residue polypeptide: Protease HtpX (287 aa).

2 helical membrane-spanning segments follow: residues 4 to 24 (IFLL…VMSI) and 33 to 53 (GGLL…SLAI). H139 serves as a coordination point for Zn(2+). E140 is an active-site residue. Zn(2+) is bound at residue H143. The next 2 membrane-spanning stretches (helical) occupy residues 154–174 (LIQG…AGII) and 195–215 (AVVF…VAYF). Residue E220 participates in Zn(2+) binding.

Belongs to the peptidase M48B family. The cofactor is Zn(2+).

The protein localises to the cell inner membrane. The chain is Protease HtpX from Shewanella oneidensis (strain ATCC 700550 / JCM 31522 / CIP 106686 / LMG 19005 / NCIMB 14063 / MR-1).